The chain runs to 750 residues: Photosystem I P700 chlorophyll a apoprotein A1 (750 aa).

The next 8 helical transmembrane spans lie at 70 to 93 (VFSA…FHGA), 156 to 179 (LYCT…FHYH), 195 to 219 (LNHH…HVSL), 291 to 309 (IAHH…GHMY), 346 to 369 (WHAQ…HHMY), 385 to 411 (LSLF…IFMV), 433 to 455 (AIIS…LYIH), and 531 to 549 (FLVH…LILL). [4Fe-4S] cluster is bound by residues cysteine 573 and cysteine 582. Helical transmembrane passes span 589–610 (HVFL…HFSW) and 664–686 (LSAY…MFLF). Histidine 675 is a binding site for chlorophyll a'. Positions 683 and 691 each coordinate chlorophyll a. A phylloquinone-binding site is contributed by tryptophan 692. The helical transmembrane segment at 724-744 (AVGVTHYLLGGIATTWAFFLA) threads the bilayer.

The protein belongs to the PsaA/PsaB family. In terms of assembly, the PsaA/B heterodimer binds the P700 chlorophyll special pair and subsequent electron acceptors. PSI consists of a core antenna complex that captures photons, and an electron transfer chain that converts photonic excitation into a charge separation. The eukaryotic PSI reaction center is composed of at least 11 subunits. It depends on P700 is a chlorophyll a/chlorophyll a' dimer, A0 is one or more chlorophyll a, A1 is one or both phylloquinones and FX is a shared 4Fe-4S iron-sulfur center. as a cofactor.

The protein resides in the plastid. Its subcellular location is the chloroplast thylakoid membrane. The enzyme catalyses reduced [plastocyanin] + hnu + oxidized [2Fe-2S]-[ferredoxin] = oxidized [plastocyanin] + reduced [2Fe-2S]-[ferredoxin]. Functionally, psaA and PsaB bind P700, the primary electron donor of photosystem I (PSI), as well as the electron acceptors A0, A1 and FX. PSI is a plastocyanin-ferredoxin oxidoreductase, converting photonic excitation into a charge separation, which transfers an electron from the donor P700 chlorophyll pair to the spectroscopically characterized acceptors A0, A1, FX, FA and FB in turn. Oxidized P700 is reduced on the lumenal side of the thylakoid membrane by plastocyanin. The protein is Photosystem I P700 chlorophyll a apoprotein A1 of Daucus carota (Wild carrot).